Reading from the N-terminus, the 757-residue chain is Transmembrane channel-like protein 1 (757 aa).

The segment at 1-74 (MLQIQVEEKE…RRRLRRGAEE (74 aa)) is disordered. The Cytoplasmic portion of the chain corresponds to 1 to 176 (MLQIQVEEKE…KIKAIESQFG (176 aa)). The segment covering 8 to 23 (EKEEDTEESSSEEEED) has biased composition (acidic residues). Residue serine 30 is modified to Phosphoserine. Threonine 38 carries the post-translational modification Phosphothreonine. Residues 43–54 (NEDDPEPEPEDE) show a composition bias toward acidic residues. A required for interaction with CIB2 region spans residues 81–130 (EELERLKALLDENRQMIATVKCKPWKMEKKIEVLKEAKKFVSENEGALGK). Position 122 is a phosphoserine (serine 122). The chain crosses the membrane as a helical span at residues 177 to 214 (SSVASYFLFLRWMYGVNMVLFVLTFSLIMLPEYLWGLP). The Extracellular segment spans residues 215-265 (YGSLPRKTVPRAEEASAANFGVLYDFNGLAQYSVLFYGYYDNKRTIGWLNF). Residues 266-297 (RLPLSYFLVGIMCIGYSFLVVLKAMTKNIGDD) form a helical membrane-spanning segment. Positions 298-352 (GGGDDNTFNFSWKVFCSWDYLIGNPETADNKFNSITMNFKEAIIEERAAQVEENI) are required for interaction with CIB2. Residues 298–353 (GGGDDNTFNFSWKVFCSWDYLIGNPETADNKFNSITMNFKEAIIEERAAQVEENIH) lie on the Cytoplasmic side of the membrane. Phosphoserine is present on serine 308. Residues 354–384 (LIRFLRFLANFFVFLTLGASGYLIFWAVKRS) form a helical membrane-spanning segment. Residues 385–396 (QEFAQQDPDTLG) are Extracellular-facing. The residue at position 394 (threonine 394) is a Phosphothreonine. The helical transmembrane segment at 397–424 (WWEKNEMNMVMSLLGMFCPTLFDLFAEL) threads the bilayer. At 425–428 (EDYH) the chain is on the cytoplasmic side. Residues 429–463 (PLIALKWLLGRIFALLLGNLYVFILALMDEINNKI) form a helical membrane-spanning segment. Over 464–512 (EEEKLVKANITLWEANMIKAYNESLSGLSGNTTGAPFFVHPADVPRGPC) the chain is Extracellular. A helical transmembrane segment spans residues 513-550 (WETMVGQEFVRLTVSDVLTTYVTILIGDFLRACFVRFC). Residues 551–569 (NYCWCWDLEYGYPSYTEFD) lie on the Cytoplasmic side of the membrane. Residues 570 to 590 (ISGNVLALIFNQGMIWMGSFF) form a helical membrane-spanning segment. At 591 to 593 (APS) the chain is on the extracellular side. A helical transmembrane segment spans residues 594 to 616 (LPGINILRLHTSMYFQCWAVMCC). Residues 617–630 (NVPEARVFKASRSN) lie on the Cytoplasmic side of the membrane. Residues 631–654 (NFYLGMLLLILFLSTMPVLYMIVS) form a helical membrane-spanning segment. The Extracellular segment spans residues 655–697 (LPPSFDCGPFSGKNRMFEVIGETLEHDFPSWMAKILRQLSNPG). Residues 698-731 (LVIAVILVMVLTIYYLNATAKGQKAANLDLKKKM) form a helical membrane-spanning segment. Residues 732–757 (KQQALENKMRNKKMAAARAAAAAGGQ) are Cytoplasmic-facing.

This sequence belongs to the TMC family. In terms of assembly, forms the MET channel composed of TMC dimer (TMC1 or TMC2), TMIE, TOMT, CIB (CIB2 or CIB3), LHFPL5 and PCDH15. Interacts with PIEZO1 and PIEZO2; the interaction may be part of the MET complex. The interaction of TMC1 and TMC2 with TOMT is required for the transportation of TMC1/2 into the stereocilia of hair cells. Interacts (via N-terminus) with both isoforms CD1 and CD3 of PCDH15. Can form a heterodimer with TMC2, TMC5 or TMC7. As to expression, detected in cochlear inner and outer hair cells and in neurosensory epithelia of the vestibular end organs. Also expressed in cortex, cerebellum, eye, colon, ovary and testis.

The protein localises to the cell membrane. It carries out the reaction Ca(2+)(in) = Ca(2+)(out). Pore-forming subunit of the mechanotransducer (MET) non-selective cation channel complex located at the tips of stereocilia of cochlear hair cells and that mediates sensory transduction in the auditory system. The MET complex is composed of two dimeric pore-forming ion-conducting transmembrane TMC (TMC1 or TMC2) subunits, several auxiliary proteins including LHFPL5, TMIE, CIB2/3 and TOMT, the tip-link PCDH15, and possibly the PIEZO subunits. MET channel is activated by tension in the tip-link extending from the side wall of one stereocilium to the tip of the adjacent shorter stereocilium, where the channel is located. TMC1 MET channel is highly permeable to calcium and likely transports monovalent cations. Also involved in vestibular hair cells transduction current. In Mus musculus (Mouse), this protein is Transmembrane channel-like protein 1.